Consider the following 920-residue polypeptide: Alpha-L-rhamnosidase (920 aa).

The signal sequence occupies residues 1-19 (MCVVRTFWFAVLTVIFAVS). C20 carries the N-palmitoyl cysteine lipid modification. A lipid anchor (S-diacylglycerol cysteine) is attached at C20. Alpha-L-rhamnose contacts are provided by residues D500, 504–506 (RDE), D513, and W565. The active-site Proton donor is the E506. Residue E779 is the Proton acceptor of the active site. H800 provides a ligand contact to alpha-L-rhamnose.

The protein belongs to the glycosyl hydrolase 78 family.

The protein resides in the cell membrane. It carries out the reaction Hydrolysis of terminal non-reducing alpha-L-rhamnose residues in alpha-L-rhamnosides.. In terms of biological role, alpha-L-rhamnosidase involved in ulvan degradation. Ulvan is the main polysaccharide component of the Ulvales (green seaweed) cell wall. It is composed of disaccharide building blocks comprising 3-sulfated rhamnose (Rha3S) linked to D-glucuronic acid (GlcA), L-iduronic acid (IduA), or D-xylose (Xyl). The enzyme is able to degrade p-nitrophenyl-alpha-L-rhamnopyranoside (PNP-Rha) in vitro. Incubating the enzyme with the products obtained after degradation with ulvan lyase and beta-glucuronyl hydrolase (i.e. the trisaccharides beta-alpha-L-Rha3S-IduA-Rha3S and beta-alpha-L-Rha3S-GlcA-Rha3S) showed no degradation, suggesting that the enzyme is active on neutral rhamnose and that desulfation of the oligosaccharide must be achieved before cleavage of rhamnose. This chain is Alpha-L-rhamnosidase, found in Alteromonas sp. (strain LOR).